A 425-amino-acid chain; its full sequence is Kynureninase (425 aa).

Residues Leu105, Thr106, 133–136 (FPSD), Asp218, His221, and Tyr243 contribute to the pyridoxal 5'-phosphate site. An N6-(pyridoxal phosphate)lysine modification is found at Lys244. Pyridoxal 5'-phosphate-binding residues include Trp274 and Asn302.

It belongs to the kynureninase family. In terms of assembly, homodimer. Pyridoxal 5'-phosphate serves as cofactor.

It catalyses the reaction L-kynurenine + H2O = anthranilate + L-alanine + H(+). It carries out the reaction 3-hydroxy-L-kynurenine + H2O = 3-hydroxyanthranilate + L-alanine + H(+). The protein operates within amino-acid degradation; L-kynurenine degradation; L-alanine and anthranilate from L-kynurenine: step 1/1. It participates in cofactor biosynthesis; NAD(+) biosynthesis; quinolinate from L-kynurenine: step 2/3. Catalyzes the cleavage of L-kynurenine (L-Kyn) and L-3-hydroxykynurenine (L-3OHKyn) into anthranilic acid (AA) and 3-hydroxyanthranilic acid (3-OHAA), respectively. This chain is Kynureninase, found in Flavobacterium johnsoniae (strain ATCC 17061 / DSM 2064 / JCM 8514 / BCRC 14874 / CCUG 350202 / NBRC 14942 / NCIMB 11054 / UW101) (Cytophaga johnsonae).